Consider the following 152-residue polypeptide: Flagellar assembly factor FliW (152 aa).

It belongs to the FliW family. Interacts with translational regulator CsrA and flagellin(s).

It localises to the cytoplasm. Acts as an anti-CsrA protein, binds CsrA and prevents it from repressing translation of its target genes, one of which is flagellin. Binds to flagellin and participates in the assembly of the flagellum. This chain is Flagellar assembly factor FliW, found in Desulfitobacterium hafniense (strain Y51).